Reading from the N-terminus, the 630-residue chain is Triacylglycerol lipase ptl2 (630 aa).

The PNPLA domain maps to 251–442; sequence LCLSGGASFA…RTDIPLSELR (192 aa). A GXSXG motif is present at residues 282–286; that stretch reads GTSGG. Ser-284 (nucleophile) is an active-site residue. Residue Asp-429 is the Proton acceptor of the active site.

This sequence belongs to the PLPL family.

The protein resides in the lipid droplet. The enzyme catalyses a triacylglycerol + H2O = a diacylglycerol + a fatty acid + H(+). In terms of biological role, lipid particle-localized triacylglycerol (TAG) lipase. The lipid droplet/particle is a lipid storage compartment which serves as a depot of energy and building blocks for membrane lipid biosynthesis. Involved in the mobilization of the non-polar storage lipids triacylglycerols (TAGs) from lipid particles by hydrolysis of TAGs, releasing and supplying specific fatty acids to the appropriate metabolic pathways. The protein is Triacylglycerol lipase ptl2 (ptl2) of Schizosaccharomyces pombe (strain 972 / ATCC 24843) (Fission yeast).